A 205-amino-acid polypeptide reads, in one-letter code: Ras-related protein Rab-1A (205 aa).

At Ser2 the chain carries N-acetylserine. GTP is bound by residues Ser20, Gly21, Gly23, Lys24, Ser25, Cys26, Glu38, and Thr43. Ser25 lines the Mg(2+) pocket. The Switch 1 motif lies at 34 to 48 (DTYTESYISTIGVDF). Residue Thr43 participates in Mg(2+) binding. Residues Lys49 and Lys61 each participate in a glycyl lysine isopeptide (Lys-Gly) (interchain with G-Cter in ubiquitin) cross-link. Asp66 provides a ligand contact to Mg(2+). The Switch 2 signature appears at 66–83 (DTAGQERFRTITSSYYRG). Residues Gly69, Asn124, Lys125, Asp127, Ala155, and Lys156 each coordinate GTP. Residues 178-205 (PGATAGGAEKSNVKIQSTPVKQSGGGCC) form a disordered region. Residue Ser194 is modified to Phosphoserine; by CDK1. S-geranylgeranyl cysteine attachment occurs at residues Cys204 and Cys205.

Belongs to the small GTPase superfamily. Rab family. As to quaternary structure, may interact with YIPF5. Interacts with C9orf72; the interaction mediates recruitment of RAB1A to the ATG1/ULK1 kinase complex. Interacts with GDI1; this promotes dissociation from membranes. Requires Mg(2+) as cofactor. In terms of processing, phosphorylated by CDK1 kinase during mitosis. Post-translationally, ubiquitinated via 'Lys-11'-linked ubiquitination on Lys-49 and Lys-61; impairing the recruitment of guanosine diphosphate (GDP) dissociation inhibitor 1/GDI1.

It localises to the golgi apparatus. The protein localises to the endoplasmic reticulum. The protein resides in the early endosome. It is found in the cytoplasm. Its subcellular location is the cytosol. It localises to the membrane. The protein localises to the melanosome. It carries out the reaction GTP + H2O = GDP + phosphate + H(+). With respect to regulation, regulated by guanine nucleotide exchange factors (GEFs) which promote the exchange of bound GDP for free GTP. Regulated by GTPase activating proteins (GAPs) which increase the GTP hydrolysis activity. Inhibited by GDP dissociation inhibitors (GDIs). The small GTPases Rab are key regulators of intracellular membrane trafficking, from the formation of transport vesicles to their fusion with membranes. Rabs cycle between an inactive GDP-bound form and an active GTP-bound form that is able to recruit to membranes different sets of downstream effectors directly responsible for vesicle formation, movement, tethering and fusion. RAB1A regulates vesicular protein transport from the endoplasmic reticulum (ER) to the Golgi compartment and on to the cell surface, and plays a role in IL-8 and growth hormone secretion. Required to modulate the compacted morphology of the Golgi. Regulates the level of CASR present at the cell membrane. Plays a role in cell adhesion and cell migration, via its role in protein trafficking. Plays a role in autophagosome assembly and cellular defense reactions against pathogenic bacteria. Plays a role in microtubule-dependent protein transport by early endosomes and in anterograde melanosome transport. The sequence is that of Ras-related protein Rab-1A (RAB1A) from Sus scrofa (Pig).